The chain runs to 392 residues: MAEGFCKNFYSNKLDHLEVQIAKKTKILRVLEQKRAELNRRVRFLREEISIVQEPSSNVGVVVEKMGKMQVLVKTNPDGKYLVKVEPGVNYDELKAGVRVALRSDSYDVHRILPTKVDPLVSLMMVEKVPDSTYQMIGGLDEQIKEIREVIELPIKHPELFENLGIAQPKGVLLYGPPGTGKTLLARAVAHHTQCKFIRVSGSELVQKYIGEGSRLVRELFIMAREHAPSIIFMDEIDSIGSTRGDSNKGSDSEVQRTMLELLNQLDGFESHNNIKVIMATNRIDILDPALLRTGRIDRKIEFPPPNESARLEILKIHSRKMNLTKGIDLETIASKMVGCSGAEVKAVCTEAGMYALRERRVHVTQEDFEMAVHKVLKKTGDLNSDLRKLLK.

176-183 (GPPGTGKT) contacts ATP.

It belongs to the AAA ATPase family. As to quaternary structure, the 26S proteasome consists of a 20S proteasome core and two 19S regulatory subunits. The 20S proteasome core is composed of 28 subunits that are arranged in four stacked rings, resulting in a barrel-shaped structure. The two end rings are each formed by seven alpha subunits, and the two central rings are each formed by seven beta subunits. The catalytic chamber with the active sites is on the inside of the barrel.

Its subcellular location is the cytoplasm. The protein localises to the nucleus. Its function is as follows. Acts as a regulatory subunit of the 26S proteasome which degrades poly-ubiquitinated proteins in the cytoplasm and in the nucleus. It is essential for the regulated turnover of proteins and for the removal of misfolded proteins. The proteasome is a multicatalytic proteinase complex that is characterized by its ability to cleave peptides with Arg, Phe, Tyr, Leu, and Glu adjacent to the leaving group at neutral or slightly basic pH. This chain is 26S proteasome regulatory subunit 8 homolog (RPT6), found in Encephalitozoon cuniculi (strain GB-M1) (Microsporidian parasite).